We begin with the raw amino-acid sequence, 372 residues long: Queuine tRNA-ribosyltransferase (372 aa).

The active-site Proton acceptor is Asp92. Substrate contacts are provided by residues 92–96 (DSGGY), Asp146, Gln188, and Gly215. Residues 246-252 (GIGSLKE) are RNA binding. Asp265 (nucleophile) is an active-site residue. The RNA binding; important for wobble base 34 recognition stretch occupies residues 270 to 274 (TRLGR). Positions 303, 305, 308, and 334 each coordinate Zn(2+).

This sequence belongs to the queuine tRNA-ribosyltransferase family. As to quaternary structure, homodimer. Within each dimer, one monomer is responsible for RNA recognition and catalysis, while the other monomer binds to the replacement base PreQ1. Zn(2+) serves as cofactor.

It catalyses the reaction 7-aminomethyl-7-carbaguanine + guanosine(34) in tRNA = 7-aminomethyl-7-carbaguanosine(34) in tRNA + guanine. Its pathway is tRNA modification; tRNA-queuosine biosynthesis. Catalyzes the base-exchange of a guanine (G) residue with the queuine precursor 7-aminomethyl-7-deazaguanine (PreQ1) at position 34 (anticodon wobble position) in tRNAs with GU(N) anticodons (tRNA-Asp, -Asn, -His and -Tyr). Catalysis occurs through a double-displacement mechanism. The nucleophile active site attacks the C1' of nucleotide 34 to detach the guanine base from the RNA, forming a covalent enzyme-RNA intermediate. The proton acceptor active site deprotonates the incoming PreQ1, allowing a nucleophilic attack on the C1' of the ribose to form the product. After dissociation, two additional enzymatic reactions on the tRNA convert PreQ1 to queuine (Q), resulting in the hypermodified nucleoside queuosine (7-(((4,5-cis-dihydroxy-2-cyclopenten-1-yl)amino)methyl)-7-deazaguanosine). The chain is Queuine tRNA-ribosyltransferase from Prochlorococcus marinus (strain MIT 9515).